A 417-amino-acid chain; its full sequence is Riboflavin biosynthesis protein RibBA (417 aa).

The interval 1–204 (MTRFDSIERA…IADLIAWRRK (204 aa)) is DHBP synthase. Residues 28 to 29 (RE), Asp-33, 141 to 145 (RPGHT), and Glu-165 each bind D-ribulose 5-phosphate. Residue Glu-29 participates in Mg(2+) binding. Residue His-144 participates in Mg(2+) binding. A GTP cyclohydrolase II region spans residues 205–417 (HEKHVERVAS…LDDFEAGEML (213 aa)). GTP is bound at residue 259-263 (RVHSE). Zn(2+)-binding residues include Cys-264, Cys-275, and Cys-277. Residues Gln-280, 303–305 (EGR), and Thr-325 contribute to the GTP site. Catalysis depends on Asp-337, which acts as the Proton acceptor; for GTP cyclohydrolase activity. Arg-339 acts as the Nucleophile; for GTP cyclohydrolase activity in catalysis. The GTP site is built by Thr-360 and Lys-365.

It in the N-terminal section; belongs to the DHBP synthase family. The protein in the C-terminal section; belongs to the GTP cyclohydrolase II family. Requires Mg(2+) as cofactor. Mn(2+) serves as cofactor. It depends on Zn(2+) as a cofactor.

The enzyme catalyses D-ribulose 5-phosphate = (2S)-2-hydroxy-3-oxobutyl phosphate + formate + H(+). It carries out the reaction GTP + 4 H2O = 2,5-diamino-6-hydroxy-4-(5-phosphoribosylamino)-pyrimidine + formate + 2 phosphate + 3 H(+). The protein operates within cofactor biosynthesis; riboflavin biosynthesis; 2-hydroxy-3-oxobutyl phosphate from D-ribulose 5-phosphate: step 1/1. It participates in cofactor biosynthesis; riboflavin biosynthesis; 5-amino-6-(D-ribitylamino)uracil from GTP: step 1/4. Its function is as follows. Catalyzes the conversion of D-ribulose 5-phosphate to formate and 3,4-dihydroxy-2-butanone 4-phosphate. In terms of biological role, catalyzes the conversion of GTP to 2,5-diamino-6-ribosylamino-4(3H)-pyrimidinone 5'-phosphate (DARP), formate and pyrophosphate. The protein is Riboflavin biosynthesis protein RibBA of Rhodococcus jostii (strain RHA1).